Here is a 315-residue protein sequence, read N- to C-terminus: Putative quercetin 2,3-dioxygenase PA1205 (315 aa).

Residues His77, His79, His121, and Glu123 each contribute to the a divalent metal cation site.

It belongs to the pirin family. The cofactor is a divalent metal cation.

The enzyme catalyses quercetin + O2 = 2-(3,4-dihydroxybenzoyloxy)-4,6-dihydroxybenzoate + CO. It participates in flavonoid metabolism; quercetin degradation. Its function is as follows. Putative quercetin 2,3-dioxygenase. This Pseudomonas aeruginosa (strain ATCC 15692 / DSM 22644 / CIP 104116 / JCM 14847 / LMG 12228 / 1C / PRS 101 / PAO1) protein is Putative quercetin 2,3-dioxygenase PA1205.